A 339-amino-acid polypeptide reads, in one-letter code: Transmembrane protein 120B (339 aa).

Residues 1–67 adopt a coiled-coil conformation; sequence MSGQLERCER…KHTLQRYKRH (67 aa). Helical transmembrane passes span 102 to 124, 132 to 152, 159 to 179, 187 to 207, 270 to 290, and 302 to 322; these read GLYL…AKFA, FKLY…FVLH, VFNF…SILI, GWWV…LTWP, FLLP…VTLF, and QVFV…LTTL.

This sequence belongs to the TMEM120 family. Heterooligomer with TMEM120A. Expressed in inguinal and subcutaneous white adipose tissue and in brown adipose tissue.

It localises to the nucleus inner membrane. Its function is as follows. Necessary for efficient adipogenesis. Does not show ion channel activity. This is Transmembrane protein 120B from Mus musculus (Mouse).